Here is a 215-residue protein sequence, read N- to C-terminus: Reticulon-like protein B14 (215 aa).

Positions 31–211 (FADIMFWKNK…NKIPKAQAKT (181 aa)) constitute a Reticulon domain. The next 3 membrane-spanning stretches (helical) occupy residues 41–61 (KESG…EVVE), 62–82 (YPFI…FLIW), and 141–161 (LWIL…YIVF).

It is found in the endoplasmic reticulum membrane. This is Reticulon-like protein B14 (RTNLB14) from Arabidopsis thaliana (Mouse-ear cress).